Here is a 168-residue protein sequence, read N- to C-terminus: Protein C2-DOMAIN ABA-RELATED 1 (168 aa).

Methionine 1 carries the N-acetylmethionine modification. The region spanning methionine 1–glycine 104 is the C2 domain. Positions 21, 22, 27, 73, 74, 75, and 81 each coordinate Ca(2+).

It belongs to the plant CAR protein family. In terms of assembly, dimers and oligomers. Binds to PYR/PYL/RCAR abscisic acid intracellular receptors in an ABA-independent manner, both at the plasma membrane and in the nucleus. Interacts directly with PYR1, PYL1, PYL4, PYL6 and PYL8. Binds phospholipids in a Ca(2+)-dependent manner. Ca(2+) is required as a cofactor. As to expression, expressed in roots.

It is found in the cell membrane. It localises to the nucleus. Its function is as follows. Stimulates the GTPase/ATPase activities of Obg-like ATPases. Mediates the transient calcium-dependent interaction of PYR/PYL/RCAR abscisic acid (ABA) receptors with the plasma membrane and thus regulates ABA sensitivity. Binds liposomes in the absence of exogenous Ca(2+), but this activity is enhanced in the presence of Ca(2+) and generates membrane curvature. This is Protein C2-DOMAIN ABA-RELATED 1 from Arabidopsis thaliana (Mouse-ear cress).